The sequence spans 863 residues: Bifunctional uridylyltransferase/uridylyl-removing enzyme (863 aa).

The segment at 1–328 is uridylyltransferase; sequence MLFPLSLSSP…SSNQATVIEQ (328 aa). The uridylyl-removing stretch occupies residues 329–687; it reads LDDDFQLINQ…ISNRFSLGGT (359 aa). One can recognise an HD domain in the interval 446–568; it reads VDEHTLRVML…VQNQVRLDYL (123 aa). ACT domains are found at residues 688-772 and 794-863; these read EVFI…PNRQ and EMEL…RNIG.

Belongs to the GlnD family. Requires Mg(2+) as cofactor.

It catalyses the reaction [protein-PII]-L-tyrosine + UTP = [protein-PII]-uridylyl-L-tyrosine + diphosphate. The enzyme catalyses [protein-PII]-uridylyl-L-tyrosine + H2O = [protein-PII]-L-tyrosine + UMP + H(+). Uridylyltransferase (UTase) activity is inhibited by glutamine, while glutamine activates uridylyl-removing (UR) activity. Its function is as follows. Modifies, by uridylylation and deuridylylation, the PII regulatory proteins (GlnB and homologs), in response to the nitrogen status of the cell that GlnD senses through the glutamine level. Under low glutamine levels, catalyzes the conversion of the PII proteins and UTP to PII-UMP and PPi, while under higher glutamine levels, GlnD hydrolyzes PII-UMP to PII and UMP (deuridylylation). Thus, controls uridylylation state and activity of the PII proteins, and plays an important role in the regulation of nitrogen assimilation and metabolism. This is Bifunctional uridylyltransferase/uridylyl-removing enzyme from Haemophilus influenzae (strain PittEE).